Reading from the N-terminus, the 101-residue chain is Apolipoprotein C-II (101 aa).

Positions 1 to 22 (MGIRYLLVLVLVLLVLGCEVQG) are cleaved as a signal peptide. The segment at 66 to 74 (TMDEKIREI) is lipid binding. Positions 78–101 (STAAVSTYAGIFTDQLLSMLKGDQ) are lipoprotein lipase cofactor.

The protein belongs to the apolipoprotein C2 family. Post-translationally, proapolipoprotein C-II is synthesized as a sialic acid containing glycoprotein which is subsequently desialylated prior to its proteolytic processing. In terms of processing, proapolipoprotein C-II, the major form found in plasma undergoes proteolytic cleavage of its N-terminal hexapeptide to generate apolipoprotein C-II, which occurs as the minor form in plasma.

The protein localises to the secreted. Its function is as follows. Component of chylomicrons, very low-density lipoproteins (VLDL), low-density lipoproteins (LDL), and high-density lipoproteins (HDL) in plasma. Plays an important role in lipoprotein metabolism as an activator of lipoprotein lipase. Both proapolipoprotein C-II and apolipoprotein C-II can activate lipoprotein lipase. This chain is Apolipoprotein C-II (APOC2), found in Phoca vitulina (Harbor seal).